A 212-amino-acid polypeptide reads, in one-letter code: External core antigen (212 aa).

Positions 1–19 (MQLFHLCLIISCSCPTVQA) are cleaved as a signal peptide. The interval 25–27 (GWL) is HBEAG. A disordered region spans residues 172–212 (LPETTVVRRRGRSPRRRTPSPRRRRSQSPRRRRSQSRESQC). Basic residues predominate over residues 178 to 205 (VRRRGRSPRRRTPSPRRRRSQSPRRRRS). One copy of the 1; half-length repeat lies at 184–190 (SPRRRTP). Positions 184 to 206 (SPRRRTPSPRRRRSQSPRRRRSQ) are 3 X 8 AA repeats of S-P-R-R-R-R-S-Q. The propeptide occupies 184-212 (SPRRRTPSPRRRRSQSPRRRRSQSRESQC). 2 tandem repeats follow at residues 191 to 198 (SPRRRRSQ) and 199 to 206 (SPRRRRSQ).

This sequence belongs to the orthohepadnavirus precore antigen family. As to quaternary structure, homodimerizes. Phosphorylated. In terms of processing, cleaved by host furin.

The protein resides in the secreted. Its subcellular location is the host nucleus. In terms of biological role, may regulate immune response to the intracellular capsid in acting as a T-cell tolerogen, by having an immunoregulatory effect which prevents destruction of infected cells by cytotoxic T-cells. This immune regulation may predispose to chronicity during perinatal infections and prevent severe liver injury during adult infections. The chain is External core antigen from Hepatitis B virus genotype D (isolate Germany/1-91/1991) (HBV-D).